The following is a 74-amino-acid chain: Anaphase-promoting complex subunit 13 (74 aa).

Residues 33-53 (LNELPEPEQDNGGTTESVKEQ) form a disordered region.

This sequence belongs to the APC13 family. In terms of assembly, the mammalian APC/C is composed at least of 14 distinct subunits ANAPC1, ANAPC2, CDC27/APC3, ANAPC4, ANAPC5, CDC16/APC6, ANAPC7, CDC23/APC8, ANAPC10, ANAPC11, CDC26/APC12, ANAPC13, ANAPC15 and ANAPC16 that assemble into a complex of at least 19 chains with a combined molecular mass of around 1.2 MDa; APC/C interacts with FZR1 and FBXO5.

It is found in the nucleus. It participates in protein modification; protein ubiquitination. In terms of biological role, component of the anaphase promoting complex/cyclosome (APC/C), a cell cycle-regulated E3 ubiquitin ligase that controls progression through mitosis and the G1 phase of the cell cycle. The APC/C complex acts by mediating ubiquitination and subsequent degradation of target proteins: it mainly mediates the formation of 'Lys-11'-linked polyubiquitin chains and, to a lower extent, the formation of 'Lys-48'- and 'Lys-63'-linked polyubiquitin chains. The APC/C complex catalyzes assembly of branched 'Lys-11'-/'Lys-48'-linked branched ubiquitin chains on target proteins. The sequence is that of Anaphase-promoting complex subunit 13 (ANAPC13) from Bos taurus (Bovine).